The primary structure comprises 861 residues: Replication factor C subunit 1 (861 aa).

Residues 1–103 (MVNISDFFGK…SSKSSDSASN (103 aa)) form a disordered region. Polar residues predominate over residues 16–28 (RSSTSRPTRQVGS). Thr-38 is modified (phosphothreonine). Ser-40 is modified (phosphoserine). Thr-63 carries the post-translational modification Phosphothreonine. Residues 153 to 243 (GKPNCLLGLT…PAEGGDGEAA (91 aa)) form the BRCT domain. ATP is bound by residues Thr-299, Cys-311, 353-361 (GPPGIGKTT), and Asn-456. Residues 788–861 (STIGGGGVGT…GGSKKRKTKA (74 aa)) form a disordered region. The span at 803–823 (DFEDVVDADDNPVPADDEETQ) shows a compositional bias: acidic residues. 2 short sequence motifs (nuclear localization signal) span residues 830-834 (KKDKL) and 855-860 (KKRKTK). Residues 836-861 (KQKAKPTKRKTATSKPGGSKKRKTKA) show a composition bias toward basic residues.

It belongs to the activator 1 large subunit family. Replication factor C (RFC) is a heteropentamer of subunits RFC1, RFC2, RFC3, RFC4 and RFC5 and forms a complex with POL30/PCNA in the presence of ATP. Interacts with ECO1 and POL30/PCNA.

It is found in the nucleus. Its function is as follows. Component of the ATP-dependent clamp loader RFC complex for the POL30/PCNA homotrimer DNA clamp. During a clamp loading circle, the RFC:clamp complex binds to DNA and the recognition of the double-stranded/single-stranded junction stimulates ATP hydrolysis by RFC. The complex presumably provides bipartite ATP sites in which one subunit supplies a catalytic site for hydrolysis of ATP bound to the neighboring subunit. Dissociation of RFC from the clamp leaves the clamp encircling DNA. Replication factor C (RFC or activator 1) complex acts during elongation of primed DNA templates by DNA polymerase delta and epsilon. RFC has an essential but redundant activity in sister chromatid cohesion establishment. The chain is Replication factor C subunit 1 (RFC1) from Saccharomyces cerevisiae (strain ATCC 204508 / S288c) (Baker's yeast).